We begin with the raw amino-acid sequence, 468 residues long: Siroheme synthase 1 (468 aa).

A precorrin-2 dehydrogenase /sirohydrochlorin ferrochelatase region spans residues 1 to 204 (MDYLPIFCRL…GDKASANQLA (204 aa)). Residues 22–23 (EV) and 43–44 (PA) each bind NAD(+). A Phosphoserine modification is found at S128. Residues 216–468 (GEVILVGAGP…NHGVQAAALA (253 aa)) form a uroporphyrinogen-III C-methyltransferase region. P225 is a binding site for S-adenosyl-L-methionine. The Proton acceptor role is filled by D248. Catalysis depends on K270, which acts as the Proton donor. S-adenosyl-L-methionine is bound by residues 301–303 (GGD), I306, 331–332 (TA), M383, and G412.

It in the N-terminal section; belongs to the precorrin-2 dehydrogenase / sirohydrochlorin ferrochelatase family. This sequence in the C-terminal section; belongs to the precorrin methyltransferase family.

It catalyses the reaction uroporphyrinogen III + 2 S-adenosyl-L-methionine = precorrin-2 + 2 S-adenosyl-L-homocysteine + H(+). The catalysed reaction is precorrin-2 + NAD(+) = sirohydrochlorin + NADH + 2 H(+). It carries out the reaction siroheme + 2 H(+) = sirohydrochlorin + Fe(2+). The protein operates within cofactor biosynthesis; adenosylcobalamin biosynthesis; precorrin-2 from uroporphyrinogen III: step 1/1. It participates in cofactor biosynthesis; adenosylcobalamin biosynthesis; sirohydrochlorin from precorrin-2: step 1/1. Its pathway is porphyrin-containing compound metabolism; siroheme biosynthesis; precorrin-2 from uroporphyrinogen III: step 1/1. It functions in the pathway porphyrin-containing compound metabolism; siroheme biosynthesis; siroheme from sirohydrochlorin: step 1/1. The protein operates within porphyrin-containing compound metabolism; siroheme biosynthesis; sirohydrochlorin from precorrin-2: step 1/1. Multifunctional enzyme that catalyzes the SAM-dependent methylations of uroporphyrinogen III at position C-2 and C-7 to form precorrin-2 via precorrin-1. Then it catalyzes the NAD-dependent ring dehydrogenation of precorrin-2 to yield sirohydrochlorin. Finally, it catalyzes the ferrochelation of sirohydrochlorin to yield siroheme. This Aeromonas salmonicida (strain A449) protein is Siroheme synthase 1.